The chain runs to 282 residues: Homeobox protein vex1 (282 aa).

A DNA-binding region (homeobox) is located at residues 129 to 188 (ASRARTKFTAEQLEELEKSFKENRYIGSSEKRRLSKVLKLSENQIKTWFQNRRMKFKRQT).

It is found in the nucleus. Transcriptional repressor. Acts in a ventral signaling pathway downstream of bmp4 to antagonize the Spemann organizer and ventrally pattern the embryonic mesoderm. Represses transcription of the dorsal genes gsc and otx2. The polypeptide is Homeobox protein vex1 (Xenopus tropicalis (Western clawed frog)).